A 393-amino-acid polypeptide reads, in one-letter code: MNVPATRKDFMIVNMGPHHPSMHGVLRLILSLDGEDVIDCEPILGYLHRGMEKIAENRTIIQYLPYVTRWDYLATMFTEAITINGPEQLGNIQVPKRASYIRVIMLELSRIASHLLWLGPFMADIGGQTPFFYIFRERELIYDLFEAATGMRMMHNYFRIGGVAADLPHGWLDKCLDFCDYFLTGVAEYQKLITRNPIFLERVEGIGIVSAEEAINWGLSGPMLRASGVRWDLRKVDHYECYDEFDWGVQWQKEGDSLARYLVRIGEMTESVKIIQQALEGIPGGPYENLETRSFDRERNREWNDFEYRFISKKTSPAFELPKQELYVRVEAPKGELGIFLIGDQSSFPWRWKIRPPGFINLQILPQLIKRMKLADIMTILGSIDIIMGEVDR.

This sequence belongs to the complex I 49 kDa subunit family. NDH is composed of at least 16 different subunits, 5 of which are encoded in the nucleus.

The protein localises to the plastid. The protein resides in the chloroplast thylakoid membrane. The catalysed reaction is a plastoquinone + NADH + (n+1) H(+)(in) = a plastoquinol + NAD(+) + n H(+)(out). It catalyses the reaction a plastoquinone + NADPH + (n+1) H(+)(in) = a plastoquinol + NADP(+) + n H(+)(out). NDH shuttles electrons from NAD(P)H:plastoquinone, via FMN and iron-sulfur (Fe-S) centers, to quinones in the photosynthetic chain and possibly in a chloroplast respiratory chain. The immediate electron acceptor for the enzyme in this species is believed to be plastoquinone. Couples the redox reaction to proton translocation, and thus conserves the redox energy in a proton gradient. This chain is NAD(P)H-quinone oxidoreductase subunit H, chloroplastic, found in Populus alba (White poplar).